A 480-amino-acid chain; its full sequence is G-rich sequence factor 1 (480 aa).

The N-terminal 117 residues, 1-117 (MAGTRWVLGA…AAAAVPTRSY (117 aa)), are a transit peptide targeting the mitochondrion. 2 RRM domains span residues 122 to 246 (KTTY…SSPV) and 250 to 326 (GVVR…PSRR). A Phosphoserine modification is found at serine 244. Serine 335 carries the phosphoserine modification. Residues 401–480 (HFVHMRGLPF…LFLNSCPKGK (80 aa)) enclose the RRM 3 domain.

Monomer. Found in a complex with DDX28, DHX30, FASTKD2 and FASTKD5. Interacts with the mitochondrial RNase P complex subunit TRMT10C/MRPP1. Interacts with the 2 components of the mitochondrial degradosome complex, PNPT1 and SUPV3L1, in an RNA-dependent manner.

The protein localises to the mitochondrion matrix. The protein resides in the cytoplasm. Functionally, regulator of post-transcriptional mitochondrial gene expression, required for assembly of the mitochondrial ribosome and for recruitment of mRNA and lncRNA. Binds RNAs containing the 14 base G-rich element. Preferentially binds RNAs transcribed from three contiguous genes on the light strand of mtDNA, the ND6 mRNA, and the long non-coding RNAs for MT-CYB and MT-ND5, each of which contains multiple consensus binding sequences. Involved in the degradosome-mediated decay of non-coding mitochondrial transcripts (MT-ncRNA) and tRNA-like molecules. Acts by unwinding G-quadruplex RNA structures in MT-ncRNA, thus facilitating their degradation by the degradosome. G-quadruplexes (G4) are non-canonical 4 stranded structures formed by transcripts from the light strand of mtDNA. This chain is G-rich sequence factor 1 (GRSF1), found in Homo sapiens (Human).